The following is a 545-amino-acid chain: CTP synthase (545 aa).

Residues 1 to 266 (MTHFIFVTGG…DDLICERFGF (266 aa)) are amidoligase domain. Ser13 contributes to the CTP binding site. A UTP-binding site is contributed by Ser13. Residues 14-19 (SLGKGI) and Asp71 each bind ATP. Mg(2+)-binding residues include Asp71 and Glu140. Residues 147–149 (DIE), 187–192 (KTKPTQ), and Lys223 each bind CTP. UTP contacts are provided by residues 187–192 (KTKPTQ) and Lys223. 239-241 (KDA) contributes to the ATP binding site. A Glutamine amidotransferase type-1 domain is found at 292 to 543 (RVAMVGKYVE…IDAAKTQHQK (252 aa)). Gly353 is a binding site for L-glutamine. The active-site Nucleophile; for glutamine hydrolysis is Cys380. L-glutamine contacts are provided by residues 381 to 384 (LGMQ), Glu404, and Arg471. Active-site residues include His516 and Glu518.

This sequence belongs to the CTP synthase family. As to quaternary structure, homotetramer.

The enzyme catalyses UTP + L-glutamine + ATP + H2O = CTP + L-glutamate + ADP + phosphate + 2 H(+). It carries out the reaction L-glutamine + H2O = L-glutamate + NH4(+). It catalyses the reaction UTP + NH4(+) + ATP = CTP + ADP + phosphate + 2 H(+). Its pathway is pyrimidine metabolism; CTP biosynthesis via de novo pathway; CTP from UDP: step 2/2. With respect to regulation, allosterically activated by GTP, when glutamine is the substrate; GTP has no effect on the reaction when ammonia is the substrate. The allosteric effector GTP functions by stabilizing the protein conformation that binds the tetrahedral intermediate(s) formed during glutamine hydrolysis. Inhibited by the product CTP, via allosteric rather than competitive inhibition. Its function is as follows. Catalyzes the ATP-dependent amination of UTP to CTP with either L-glutamine or ammonia as the source of nitrogen. Regulates intracellular CTP levels through interactions with the four ribonucleotide triphosphates. The chain is CTP synthase from Acinetobacter baumannii (strain ACICU).